The following is a 337-amino-acid chain: uncharacterized protein (337 aa).

2 helical membrane-spanning segments follow: residues 4–24 (FIFF…FSLI) and 26–46 (LLLW…LFAL).

The protein belongs to the plectrovirus ORF2 family.

The protein localises to the host membrane. This is an uncharacterized protein from Spiroplasma melliferum (SpV1).